Here is a 647-residue protein sequence, read N- to C-terminus: Acetyl-coenzyme A synthetase (647 aa).

Residues 192–195 (RGGR), Thr310, and Asn334 contribute to the CoA site. ATP is bound by residues 386–388 (GEP), 410–415 (DTWWQT), Asp499, and Arg514. Residue Ser522 participates in CoA binding. An ATP-binding site is contributed by Arg525. 3 residues coordinate Mg(2+): Val536, His538, and Val541. Arg583 contacts CoA. Lys608 is modified (N6-acetyllysine).

Belongs to the ATP-dependent AMP-binding enzyme family. The cofactor is Mg(2+). Post-translationally, acetylated. Deacetylation by the SIR2-homolog deacetylase activates the enzyme.

It carries out the reaction acetate + ATP + CoA = acetyl-CoA + AMP + diphosphate. Catalyzes the conversion of acetate into acetyl-CoA (AcCoA), an essential intermediate at the junction of anabolic and catabolic pathways. AcsA undergoes a two-step reaction. In the first half reaction, AcsA combines acetate with ATP to form acetyl-adenylate (AcAMP) intermediate. In the second half reaction, it can then transfer the acetyl group from AcAMP to the sulfhydryl group of CoA, forming the product AcCoA. This is Acetyl-coenzyme A synthetase from Caulobacter vibrioides (strain ATCC 19089 / CIP 103742 / CB 15) (Caulobacter crescentus).